The primary structure comprises 164 residues: FMN reductase (NADH) RutF (164 aa).

The protein belongs to the non-flavoprotein flavin reductase family. RutF subfamily.

The catalysed reaction is FMNH2 + NAD(+) = FMN + NADH + 2 H(+). Catalyzes the reduction of FMN to FMNH2 which is used to reduce pyrimidine by RutA via the Rut pathway. In Klebsiella variicola (strain At-22), this protein is FMN reductase (NADH) RutF.